Consider the following 269-residue polypeptide: Ribonuclease HII (269 aa).

Residues 61 to 250 form the RNase H type-2 domain; it reads RLVCGVDEAG…VRKMLSPGLE (190 aa). The a divalent metal cation site is built by Asp-67, Glu-68, and Asp-158.

Belongs to the RNase HII family. Mn(2+) is required as a cofactor. Requires Mg(2+) as cofactor.

It localises to the cytoplasm. It catalyses the reaction Endonucleolytic cleavage to 5'-phosphomonoester.. In terms of biological role, endonuclease that specifically degrades the RNA of RNA-DNA hybrids. This chain is Ribonuclease HII, found in Parvibaculum lavamentivorans (strain DS-1 / DSM 13023 / NCIMB 13966).